A 146-amino-acid chain; its full sequence is Hemoglobin subunit beta (146 aa).

The residue at position 1 (V1) is an N-acetylvaline. A Globin domain is found at 2–146 (QLSGEEKAAV…VANALAHKYH (145 aa)). S44 is modified (phosphoserine). K59 is subject to N6-acetyllysine. Heme b is bound at residue H63. Residue K82 is modified to N6-acetyllysine. H92 provides a ligand contact to heme b. At C93 the chain carries S-nitrosocysteine. Position 144 is an N6-acetyllysine (K144).

This sequence belongs to the globin family. Heterotetramer of two alpha chains and two beta chains. In terms of tissue distribution, red blood cells.

Functionally, involved in oxygen transport from the lung to the various peripheral tissues. The polypeptide is Hemoglobin subunit beta (HBB) (Equus caballus (Horse)).